A 173-amino-acid polypeptide reads, in one-letter code: Small ribosomal subunit protein mS25 (173 aa).

This sequence belongs to the mitochondrion-specific ribosomal protein mS25 family. As to quaternary structure, component of the mitochondrial small ribosomal subunit (mt-SSU). Mature mammalian 55S mitochondrial ribosomes consist of a small (28S) and a large (39S) subunit. The 28S small subunit contains a 12S ribosomal RNA (12S mt-rRNA) and 30 different proteins. The 39S large subunit contains a 16S rRNA (16S mt-rRNA), a copy of mitochondrial valine transfer RNA (mt-tRNA(Val)), which plays an integral structural role, and 52 different proteins.

It is found in the mitochondrion. The polypeptide is Small ribosomal subunit protein mS25 (MRPS25) (Homo sapiens (Human)).